Here is a 166-residue protein sequence, read N- to C-terminus: Emerin homolog 1 (166 aa).

The 44-residue stretch at 1–44 (MDVSQLTDAELRDSLKSHGVSVGPIVATTRKLYEKKLIKLSDGS) folds into the LEM domain. Over 1-127 (MDVSQLTDAE…QAQSNKGGFL (127 aa)) the chain is Nuclear. The segment at 62 to 99 (IISSSPKKSPPQRVFQNVSAATAAATTSPESDSDDCEE) is disordered. The helical transmembrane segment at 128-148 (GSTITFTILFVFIAVFAYFLI) threads the bilayer. The Perinuclear space segment spans residues 149 to 166 (ENAEQLKLVAETNPEDTI).

As to quaternary structure, interacts with lmn-1 and baf-1. As to expression, ubiquitous. Expressed in all cells, except in cells undergoing spermatogenesis. High expression in hypodermis, neurons, pharyngeal muscle, body wall muscle and gonadal sheath.

It localises to the nucleus inner membrane. Its subcellular location is the nucleus envelope. In terms of biological role, nuclear lamina-associated inner nuclear membrane protein that is involved in cell division, nuclear structure organization, maintenance of nuclear envelope integrity and nuclear envelope reformation after mitosis. Involved in chromosome segregation and cell division, probably via its interaction with the nuclear intermediate filament protein lmn-1, the main component of nuclear lamina. Required to organize the distribution of lmn-1, nuclear pore complexes (NPCs) and chromatin in mitotically active cells. Together with lem-2, plays a role in baf-1 enrichment at the nuclear envelope in anaphase. Together with lem-2, involved in muscle cell attachment to hypodermal cells, as well as muscle cell location and sarcomere organization. May play a role in radiation-induced DNA damage repair response. May repress binding of transcription factor pha-4 with target sequences in pharyngeal cells. This chain is Emerin homolog 1 (emr-1), found in Caenorhabditis elegans.